We begin with the raw amino-acid sequence, 122 residues long: Large ribosomal subunit protein uL14c (122 aa).

The protein belongs to the universal ribosomal protein uL14 family. In terms of assembly, part of the 50S ribosomal subunit.

Its subcellular location is the plastid. It is found in the chloroplast. Functionally, binds to 23S rRNA. The sequence is that of Large ribosomal subunit protein uL14c from Citrus sinensis (Sweet orange).